An 89-amino-acid polypeptide reads, in one-letter code: Large ribosomal subunit protein bL27 (89 aa).

The tract at residues 1 to 22 (MAHTKKGGSSRNGRDSESKRLG) is disordered.

The protein belongs to the bacterial ribosomal protein bL27 family.

In Brucella melitensis biotype 1 (strain ATCC 23456 / CCUG 17765 / NCTC 10094 / 16M), this protein is Large ribosomal subunit protein bL27.